Consider the following 235-residue polypeptide: Ferric nitrobindin-like protein (235 aa).

Residues 1 to 59 (MSDLASEGSDPAERASEHSNGNAPADRPARRSGDQAVADAAERAKATGSRNIPVLPDLP) are disordered. A GXWXGXG motif is present at residues 85–91 (GVWRGEG).

The protein belongs to the nitrobindin family.

The sequence is that of Ferric nitrobindin-like protein from Nocardia farcinica (strain IFM 10152).